A 254-amino-acid polypeptide reads, in one-letter code: UPF0246 protein BDI_1226 (254 aa).

Belongs to the UPF0246 family.

The polypeptide is UPF0246 protein BDI_1226 (Parabacteroides distasonis (strain ATCC 8503 / DSM 20701 / CIP 104284 / JCM 5825 / NCTC 11152)).